We begin with the raw amino-acid sequence, 532 residues long: O-phosphoserine--tRNA(Cys) ligase (532 aa).

Substrate is bound by residues 188-190 (HMT), 233-235 (SAS), 275-276 (YY), and asparagine 327.

It belongs to the class-II aminoacyl-tRNA synthetase family. O-phosphoseryl-tRNA(Cys) synthetase subfamily. In terms of assembly, homotetramer. Interacts with SepCysS.

The enzyme catalyses tRNA(Cys) + O-phospho-L-serine + ATP = O-phospho-L-seryl-tRNA(Cys) + AMP + diphosphate. Functionally, catalyzes the attachment of O-phosphoserine (Sep) to tRNA(Cys). This chain is O-phosphoserine--tRNA(Cys) ligase, found in Methanocella arvoryzae (strain DSM 22066 / NBRC 105507 / MRE50).